The following is a 580-amino-acid chain: Mitogen-activated protein kinase 12 (580 aa).

The segment at 18–38 (RTASGSNQSSNAGEEAASSDL) is disordered. A compositionally biased stretch (polar residues) spans 20 to 29 (ASGSNQSSNA). A Protein kinase domain is found at 87-378 (YQIQEVIGKG…AEEALADPYF (292 aa)). ATP is bound by residues 93 to 101 (IGKGSYGVV) and Lys116. Asp213 functions as the Proton acceptor in the catalytic mechanism. Thr249 is modified (phosphothreonine). Residues 249–251 (TDY) carry the TXY motif. Tyr251 carries the phosphotyrosine modification. Positions 325 to 506 (ARRYLSTMRK…SADSVARTTV (182 aa)) are required for kinase activity and nuclear localization. The segment at 458–580 (YSKGERGSPL…LSEQVSRMHS (123 aa)) is disordered. Polar residues predominate over residues 502 to 543 (ARTTVSPPMSQDAQQHGSAGQNGVTSTDLSSRSYLKSASISA). The segment covering 554–566 (EPEDDYISEEMEG) has biased composition (acidic residues).

The protein belongs to the protein kinase superfamily. CMGC Ser/Thr protein kinase family. MAP kinase subfamily. In terms of assembly, interacts with EREBP1. In terms of processing, dually phosphorylated on Thr-249 and Tyr-251, which activates the enzyme. Phosphorylated on tyrosine residue.

It is found in the cytoplasm. The protein localises to the nucleus. It carries out the reaction L-seryl-[protein] + ATP = O-phospho-L-seryl-[protein] + ADP + H(+). The catalysed reaction is L-threonyl-[protein] + ATP = O-phospho-L-threonyl-[protein] + ADP + H(+). Its activity is regulated as follows. Activated by threonine and tyrosine phosphorylation. Activated in response to hydrogen peroxide, salicylic acid, jasmonic acid, ethylene, fungal elicitor and infection with rice blast fungus (M.grisea). May be involved in defense signaling pathway. Phosphorylates EREBP1 transcriptional activator in vitro. Enhances DNA-binding activity of EREBP1 to the GCC box element of pathogenesis-related (PR) gene promoters. This chain is Mitogen-activated protein kinase 12 (MPK12), found in Oryza sativa subsp. japonica (Rice).